The sequence spans 1036 residues: Cellulose synthase-like protein D1 (1036 aa).

The tract at residues 1–99 is disordered; sequence MASSPPKKTL…GGGDGPKMGN (99 aa). Composition is skewed to polar residues over residues 9 to 19 and 69 to 80; these read TLNSQSSSLSR and NQPAGSSGSTSE. Residues 86–95 are compositionally biased toward gly residues; that stretch reads NRGGGGGDGP. Helical transmembrane passes span 178 to 198 and 208 to 228; these read ILSP…FFLW and AMWL…SWIL. D308 is an active-site residue. Positions 626 to 665 are disordered; sequence AMHVRTQSQASQTSQASDLESDTQPLNDDPDLGLPKKFGN. Residues 631-642 show a composition bias toward low complexity; it reads TQSQASQTSQAS. Residue D741 is part of the active site. 6 consecutive transmembrane segments (helical) span residues 817 to 837, 848 to 868, 895 to 915, 938 to 958, 962 to 982, and 1002 to 1022; these read IYPF…LCLF, IHFL…SLLE, LAAV…SFTL, GLFI…VIGA, IYSV…SLWV, and TIVY…WITI.

The protein belongs to the glycosyltransferase 2 family. Plant cellulose synthase-like D subfamily.

It localises to the golgi apparatus membrane. Thought to be a Golgi-localized beta-glycan synthase that polymerize the backbones of noncellulosic polysaccharides (hemicelluloses) of plant cell wall. This chain is Cellulose synthase-like protein D1 (CSLD1), found in Arabidopsis thaliana (Mouse-ear cress).